A 241-amino-acid chain; its full sequence is Lactate utilization protein C (241 aa).

The protein belongs to the LutC/YkgG family.

Is involved in L-lactate degradation and allows cells to grow with lactate as the sole carbon source. This chain is Lactate utilization protein C, found in Bacillus velezensis (strain DSM 23117 / BGSC 10A6 / LMG 26770 / FZB42) (Bacillus amyloliquefaciens subsp. plantarum).